A 111-amino-acid polypeptide reads, in one-letter code: uncharacterized protein (111 aa).

2 helical membrane-spanning segments follow: residues 7–29 and 49–71; these read LYSS…RALY and PSLL…SINL.

It is found in the membrane. This is an uncharacterized protein from Saccharomyces cerevisiae (strain ATCC 204508 / S288c) (Baker's yeast).